The chain runs to 280 residues: Ribosomal RNA small subunit methyltransferase A (280 aa).

Asn28, Leu30, Gly55, Glu77, Asp103, and Asn122 together coordinate S-adenosyl-L-methionine.

This sequence belongs to the class I-like SAM-binding methyltransferase superfamily. rRNA adenine N(6)-methyltransferase family. RsmA subfamily.

It localises to the cytoplasm. It catalyses the reaction adenosine(1518)/adenosine(1519) in 16S rRNA + 4 S-adenosyl-L-methionine = N(6)-dimethyladenosine(1518)/N(6)-dimethyladenosine(1519) in 16S rRNA + 4 S-adenosyl-L-homocysteine + 4 H(+). Its function is as follows. Specifically dimethylates two adjacent adenosines (A1518 and A1519) in the loop of a conserved hairpin near the 3'-end of 16S rRNA in the 30S particle. May play a critical role in biogenesis of 30S subunits. This Ruegeria sp. (strain TM1040) (Silicibacter sp.) protein is Ribosomal RNA small subunit methyltransferase A.